A 147-amino-acid polypeptide reads, in one-letter code: Transthyretin (147 aa).

The N-terminal stretch at 1-20 (MASHRLLLLCLAGLVFVSEA) is a signal peptide. Position 30 is a sulfocysteine (Cys-30). An L-thyroxine-binding site is contributed by Lys-35. Glu-62 is modified (4-carboxyglutamate). The residue at position 72 (Ser-72) is a Phosphoserine. Glu-74 is a binding site for L-thyroxine. N-linked (GlcNAc...) asparagine glycosylation is present at Asn-118. Ser-137 provides a ligand contact to L-thyroxine.

It belongs to the transthyretin family. Homotetramer. Dimer of dimers. In the homotetramer, subunits assemble around a central channel that can accommodate two ligand molecules. Interacts with RBP4. Post-translationally, sulfonation of the reactive cysteine Cys-30 enhances the stability of the native conformation of TTR, avoiding misassembly of the protein leading to amyloid formation. As to expression, detected in brain.

It is found in the secreted. Functionally, thyroid hormone-binding protein. Probably transports thyroxine from the bloodstream to the brain. This is Transthyretin (TTR) from Pan troglodytes (Chimpanzee).